The primary structure comprises 307 residues: Ornithine carbamoyltransferase (307 aa).

Carbamoyl phosphate contacts are provided by residues 56–59 (STRT), Gln83, Arg107, and 134–137 (HPCQ). L-ornithine is bound by residues Asn165, Asp223, and 227–228 (SM). Carbamoyl phosphate-binding positions include 263-264 (CL) and Arg291.

It belongs to the aspartate/ornithine carbamoyltransferase superfamily. OTCase family.

The protein localises to the cytoplasm. The catalysed reaction is carbamoyl phosphate + L-ornithine = L-citrulline + phosphate + H(+). It participates in amino-acid biosynthesis; L-arginine biosynthesis; L-arginine from L-ornithine and carbamoyl phosphate: step 1/3. Reversibly catalyzes the transfer of the carbamoyl group from carbamoyl phosphate (CP) to the N(epsilon) atom of ornithine (ORN) to produce L-citrulline. In Cupriavidus metallidurans (strain ATCC 43123 / DSM 2839 / NBRC 102507 / CH34) (Ralstonia metallidurans), this protein is Ornithine carbamoyltransferase.